A 357-amino-acid polypeptide reads, in one-letter code: Heat-inducible transcription repressor HrcA (357 aa).

The protein belongs to the HrcA family.

Its function is as follows. Negative regulator of class I heat shock genes (grpE-dnaK-dnaJ and groELS operons). Prevents heat-shock induction of these operons. This chain is Heat-inducible transcription repressor HrcA, found in Ureaplasma parvum serovar 3 (strain ATCC 27815 / 27 / NCTC 11736).